We begin with the raw amino-acid sequence, 307 residues long: Mitogen-activated protein kinase kinase 7 (307 aa).

In terms of domain architecture, Protein kinase spans 45–303; it reads VEKLHVLGRG…ASQLLGHPFL (259 aa). ATP-binding positions include 51 to 59 and K74; that span reads LGRGSSGIV. Residue D165 is the Proton acceptor of the active site. Phosphoserine occurs at positions 193 and 199. Phosphothreonine is present on T203.

Belongs to the protein kinase superfamily. STE Ser/Thr protein kinase family. MAP kinase kinase subfamily. As to quaternary structure, interacts with MPK15. In terms of processing, phosphorylation at Ser-193 and Ser-199 by MAP kinase kinase kinases positively regulates kinase activity. In terms of tissue distribution, expressed in all tissues, with a relatively higher level in leaves and lower level in roots and flowers.

It carries out the reaction L-seryl-[protein] + ATP = O-phospho-L-seryl-[protein] + ADP + H(+). The catalysed reaction is L-threonyl-[protein] + ATP = O-phospho-L-threonyl-[protein] + ADP + H(+). It catalyses the reaction L-tyrosyl-[protein] + ATP = O-phospho-L-tyrosyl-[protein] + ADP + H(+). Functionally, may function as a negative regulator of polar auxin transport. Positively regulates plant basal and systemic acquired resistance (SAR). Activates MPK3 and MPK6 in vitro. This chain is Mitogen-activated protein kinase kinase 7 (MKK7), found in Arabidopsis thaliana (Mouse-ear cress).